Here is a 404-residue protein sequence, read N- to C-terminus: Protein L-Myc-1b (404 aa).

Disordered stretches follow at residues 175-195 (KKQVSSGSESRTDSSDDEEID) and 238-331 (QQHN…FLER). A compositionally biased stretch (polar residues) spans 287–315 (VPAQSPTVSASPTHTSYHLKSQPSSPQSS). One can recognise a bHLH domain in the interval 321 to 373 (DKRKTHNFLERKRRNDLRSRFLALRDEIPGLVDCPKTPKVVILTKATEYLRTL). The tract at residues 373 to 401 (LHVSDRQKAQEKKQLKSKQQQLLRRLAEL) is leucine-zipper.

As to quaternary structure, efficient DNA binding requires dimerization with another bHLH protein. Binds DNA as a heterodimer with max.

The protein localises to the nucleus. This chain is Protein L-Myc-1b, found in Danio rerio (Zebrafish).